A 568-amino-acid polypeptide reads, in one-letter code: 4-hydroxy-7-methoxy-3-oxo-3,4-dihydro-2H-1,4-benzoxazin-2-yl glucoside beta-D-glucosidase, chloroplastic (568 aa).

The N-terminal 50 residues, 1-50, are a transit peptide targeting the chloroplast; the sequence is MALLVGGTLNPTTHLSLRSRAGRNSENVWLRSAASSQTSKGRFCNLTVRA. Residues Q92, H194, and 239-240 contribute to the a beta-D-glucoside site; that span reads NE. The Proton donor role is filled by E240. C259 and C265 are joined by a disulfide. A beta-D-glucoside contacts are provided by residues Y383, E456, W504, 511–512, and F520; that span reads EW. Residue E456 is the Nucleophile of the active site.

Belongs to the glycosyl hydrolase 1 family. Homohexamer. As to expression, expressed in seedlings, mesocotyl, coleoptile, leaf sheath, and roots.

The protein localises to the plastid. The protein resides in the chloroplast. It catalyses the reaction DIMBOA beta-D-glucoside + H2O = DIMBOA + D-glucose. The catalysed reaction is DIBOA beta-D-glucoside + H2O = DIBOA + D-glucose. It carries out the reaction Hydrolysis of terminal, non-reducing beta-D-glucosyl residues with release of beta-D-glucose.. With respect to regulation, inhibited by castanospermine, Ag(+) and Cu(2+). 34% inhibition by Zn(2+) and not affected by EDTA. Involved in defense of young plant parts against pests via the production of benzoxazolinones (hydroxamic acids) from hydroxamic acid glucosides. The preferred substrate is DIBOA-beta-D-glucoside. Can also use esculin and genistein glucoside as substrates, but no activity with salicin, p-nitrophenyl-alpha-glucoside or substrates related to cell wall components. The chain is 4-hydroxy-7-methoxy-3-oxo-3,4-dihydro-2H-1,4-benzoxazin-2-yl glucoside beta-D-glucosidase, chloroplastic from Secale cereale (Rye).